The sequence spans 338 residues: Oligopeptide transport ATP-binding protein OppD (338 aa).

The region spanning 7–257 is the ABC transporter domain; the sequence is LEAKQVSVAF…PKHPYTRSLL (251 aa). ATP is bound at residue 43-50; sequence GESGSGKS.

This sequence belongs to the ABC transporter superfamily. As to quaternary structure, the complex is composed of two ATP-binding proteins (OppD and OppF), two transmembrane proteins (OppB and OppC) and a solute-binding protein (OppA).

The protein localises to the cell membrane. The enzyme catalyses a [peptide](out) + ATP + H2O = a [peptide](in) + ADP + phosphate + H(+). In terms of biological role, part of the ABC transporter complex OppABCDF involved in the uptake of oligopeptides. Probably responsible for energy coupling to the transport system. Essential for uptake of peptides larger than three amino acids and for growth in milk. The sequence is that of Oligopeptide transport ATP-binding protein OppD (oppD) from Lactococcus lactis subsp. lactis (strain IL1403) (Streptococcus lactis).